The sequence spans 294 residues: Acetylglutamate kinase (294 aa).

Residues 63–64, Arg85, and Asn188 contribute to the substrate site; that span reads GG.

Belongs to the acetylglutamate kinase family. ArgB subfamily.

Its subcellular location is the cytoplasm. The enzyme catalyses N-acetyl-L-glutamate + ATP = N-acetyl-L-glutamyl 5-phosphate + ADP. It participates in amino-acid biosynthesis; L-arginine biosynthesis; N(2)-acetyl-L-ornithine from L-glutamate: step 2/4. Functionally, catalyzes the ATP-dependent phosphorylation of N-acetyl-L-glutamate. This is Acetylglutamate kinase from Methanococcus vannielii (strain ATCC 35089 / DSM 1224 / JCM 13029 / OCM 148 / SB).